A 209-amino-acid chain; its full sequence is ATP synthase subunit b 2 (209 aa).

A helical transmembrane segment spans residues 9 to 29; it reads WWGWVTLSVLVMVAGDGTLAF.

It belongs to the ATPase B chain family. In terms of assembly, F-type ATPases have 2 components, F(1) - the catalytic core - and F(0) - the membrane proton channel. F(1) has five subunits: alpha(3), beta(3), gamma(1), delta(1), epsilon(1). F(0) has three main subunits: a(1), b(2) and c(10-14). The alpha and beta chains form an alternating ring which encloses part of the gamma chain. F(1) is attached to F(0) by a central stalk formed by the gamma and epsilon chains, while a peripheral stalk is formed by the delta and b chains.

Its subcellular location is the cell inner membrane. Its function is as follows. F(1)F(0) ATP synthase produces ATP from ADP in the presence of a proton or sodium gradient. F-type ATPases consist of two structural domains, F(1) containing the extramembraneous catalytic core and F(0) containing the membrane proton channel, linked together by a central stalk and a peripheral stalk. During catalysis, ATP synthesis in the catalytic domain of F(1) is coupled via a rotary mechanism of the central stalk subunits to proton translocation. In terms of biological role, component of the F(0) channel, it forms part of the peripheral stalk, linking F(1) to F(0). This is ATP synthase subunit b 2 from Desulfosudis oleivorans (strain DSM 6200 / JCM 39069 / Hxd3) (Desulfococcus oleovorans).